Consider the following 262-residue polypeptide: MANFSPLTVFISVTSLAVFQFLFHVGSSWLSTRLTGGFHKLSARQKIEWNSRTVSSFHALVVGCFCLYILVYDDAVNADPVWGDPFMVKLNVAVTSGYLISDLLLIIYYWKEIGDKYFVTHHLAALYACYYVLGEGMLPYFGNFRLIAEFSTPFVNQRWFFEVLGYSKYSLPNMVNGVLMTISFFIVRIAVIPIYYGRVFSTFGTEAFHRLGLGAQCAWIISSVSLDIMNVMWMIKIAKGCYKVLYHRDGKLTKTQNNGKLE.

Transmembrane regions (helical) follow at residues 6–26 (PLTV…FHVG), 53–73 (TVSS…LVYD), 90–110 (LNVA…IYYW), 122–142 (HLAA…PYFG), 177–197 (GVLM…IYYG), and 218–238 (AWII…IKIA). In terms of domain architecture, TLC spans 44 to 246 (RQKIEWNSRT…IAKGCYKVLY (203 aa)).

It belongs to the TLCD4 family.

The protein resides in the membrane. This chain is TLC domain-containing protein 4-B (tlcd4-b), found in Xenopus laevis (African clawed frog).